The sequence spans 182 residues: Nucleoside-triphosphatase THEP1 (182 aa).

ATP-binding positions include 10–17 (GRPGIGKT) and 102–109 (VVVIDEIG).

It belongs to the THEP1 NTPase family.

It catalyses the reaction a ribonucleoside 5'-triphosphate + H2O = a ribonucleoside 5'-diphosphate + phosphate + H(+). Functionally, has nucleotide phosphatase activity towards ATP, GTP, CTP, TTP and UTP. May hydrolyze nucleoside diphosphates with lower efficiency. The polypeptide is Nucleoside-triphosphatase THEP1 (Thermofilum pendens (strain DSM 2475 / Hrk 5)).